Consider the following 270-residue polypeptide: Sulfur carrier protein FdhD (270 aa).

Catalysis depends on cysteine 108, which acts as the Cysteine persulfide intermediate. Mo-bis(molybdopterin guanine dinucleotide) is bound at residue phenylalanine 247–arginine 252.

The protein belongs to the FdhD family.

The protein localises to the cytoplasm. In terms of biological role, required for formate dehydrogenase (FDH) activity. Acts as a sulfur carrier protein that transfers sulfur from IscS to the molybdenum cofactor prior to its insertion into FDH. The chain is Sulfur carrier protein FdhD from Halalkalibacterium halodurans (strain ATCC BAA-125 / DSM 18197 / FERM 7344 / JCM 9153 / C-125) (Bacillus halodurans).